Consider the following 360-residue polypeptide: GTPase Obg (360 aa).

One can recognise an Obg domain in the interval 1 to 156 (MFVDSVEIII…KCVRLELKLI (156 aa)). Positions 157-360 (ADIGLVGFPN…LKFVLLEALP (204 aa)) constitute an OBG-type G domain. Residues 163 to 170 (GFPNAGKS), 188 to 192 (FTTLV), 210 to 213 (DIPG), 279 to 282 (NKCD), and 341 to 343 (SAV) each bind GTP. Mg(2+)-binding residues include Ser170 and Thr190.

Belongs to the TRAFAC class OBG-HflX-like GTPase superfamily. OBG GTPase family. Monomer. Mg(2+) is required as a cofactor.

Its subcellular location is the cytoplasm. In terms of biological role, an essential GTPase which binds GTP, GDP and possibly (p)ppGpp with moderate affinity, with high nucleotide exchange rates and a fairly low GTP hydrolysis rate. Plays a role in control of the cell cycle, stress response, ribosome biogenesis and in those bacteria that undergo differentiation, in morphogenesis control. The polypeptide is GTPase Obg (Helicobacter acinonychis (strain Sheeba)).